Here is a 451-residue protein sequence, read N- to C-terminus: MKLPGGTIICARNASSYYDTVIVGGGMVGNAMACSLGANKSFQSKSVLLLDAGRSPSLASFKPGAPFNNRVVATSPTSIDTFKKLGVWDQINSHRTKKVNRLFVFDSCSTSEIEFERGQQEEVAFIIENDLIVGSLYEKLAEYKNVDVKTGAKVEDCSIPNALENMATIKLENGDVIETSLLIGADGVNSKVRHASNLDYTTFNYNQHGLVAIVNIETANGKNETAWQRFTTLGPVALLPLSDTVSGLTWSTSPEEAQRLKQLPSDQFVDELNSALFSQNNQIPLVNQTIFALNRMNPFRTETFGRKAEGTTPPHVITVQDKSRASFPLGFGNAHSYITTRCALIGDAAHRMHPLAGQGVNLGWSDVQILDKVLGDAVREGADIGSITYLREYDSAAQKHNLPVMVSVDLLNRLYRTDAPAIVAARAFGLNAFNSLGPVKNFLMNYLSAHR.

It belongs to the UbiH/COQ6 family. As to quaternary structure, component of a multi-subunit COQ enzyme complex. The cofactor is FAD.

The protein localises to the mitochondrion inner membrane. It catalyses the reaction a 4-hydroxy-3-(all-trans-polyprenyl)benzoate + 2 reduced [2Fe-2S]-[ferredoxin] + O2 + 2 H(+) = a 3,4-dihydroxy-5-(all-trans-polyprenyl)benzoate + 2 oxidized [2Fe-2S]-[ferredoxin] + H2O. The enzyme catalyses a 2-methoxy-6-(all-trans-polyprenyl)phenol + 2 reduced [2Fe-2S]-[ferredoxin] + O2 + 2 H(+) = a 2-methoxy-6-(all-trans-polyprenyl)benzene-1,4-diol + 2 oxidized [2Fe-2S]-[ferredoxin] + H2O. It functions in the pathway cofactor biosynthesis; ubiquinone biosynthesis. FAD-dependent monooxygenase required for two non-consecutive steps during ubiquinone biosynthesis. Required for the C5-ring hydroxylation during ubiquinone biosynthesis by catalyzing the hydroxylation of 4-hydroxy-3-(all-trans-polyprenyl)benzoic acid to 3,4-dihydroxy-5-(all-trans-polyprenyl)benzoic acid. Also acts downstream of coq4, for the C1-hydroxylation during ubiquinone biosynthesis by catalyzing the hydroxylation of 2-methoxy-6-(all-trans-polyprenyl)phenol to 2-methoxy-6-(all-trans-polyprenyl)benzene-1,4-diol. The electrons required for the hydroxylation reaction are funneled indirectly to coq-6 from NADPH via a ferredoxin/ferredoxin reductase system. The protein is Ubiquinone biosynthesis monooxygenase COQ6, mitochondrial of Caenorhabditis elegans.